We begin with the raw amino-acid sequence, 256 residues long: 3-deoxy-manno-octulosonate cytidylyltransferase (256 aa).

The protein belongs to the KdsB family.

The protein localises to the cytoplasm. The enzyme catalyses 3-deoxy-alpha-D-manno-oct-2-ulosonate + CTP = CMP-3-deoxy-beta-D-manno-octulosonate + diphosphate. The protein operates within nucleotide-sugar biosynthesis; CMP-3-deoxy-D-manno-octulosonate biosynthesis; CMP-3-deoxy-D-manno-octulosonate from 3-deoxy-D-manno-octulosonate and CTP: step 1/1. Its pathway is bacterial outer membrane biogenesis; lipopolysaccharide biosynthesis. Functionally, activates KDO (a required 8-carbon sugar) for incorporation into bacterial lipopolysaccharide in Gram-negative bacteria. The chain is 3-deoxy-manno-octulosonate cytidylyltransferase from Histophilus somni (strain 2336) (Haemophilus somnus).